The following is a 574-amino-acid chain: Septation ring formation regulator EzrA (574 aa).

Residues 1 to 7 are Extracellular-facing; the sequence is MSSGIIL. Residues 8 to 26 form a helical membrane-spanning segment; that stretch reads LIVAIVLLVIIAYLVGVII. Over 27-574 the chain is Cytoplasmic; it reads RKRNDSLITS…YEKTREHIRF (548 aa). 3 coiled-coil regions span residues 102–141, 274–350, and 459–520; these read NFIRAKHEINSVESQLNLVEEDIASIREALNILKEQEEKN, ELVT…ETES, and QLEA…SFEA.

This sequence belongs to the EzrA family.

The protein resides in the cell membrane. In terms of biological role, negative regulator of FtsZ ring formation; modulates the frequency and position of FtsZ ring formation. Inhibits FtsZ ring formation at polar sites. Interacts either with FtsZ or with one of its binding partners to promote depolymerization. This chain is Septation ring formation regulator EzrA, found in Streptococcus pyogenes serotype M6 (strain ATCC BAA-946 / MGAS10394).